The primary structure comprises 294 residues: MSNENKVLKLGLPKGSLQDSTIDLFAQAGFHFSVQSRSYFPSIDDDELEAILIRAQEMAHYVELGAFDVGLTGKDWIIETDADVVEVADLVYSKASMRPVRWVLCVPESSSIQSVKDLEGKHIATEVVNITKKYLAQHGVNASVEFSWGATEVKPPDLADAIVEVTETGTSLRANKLRIIDTLLESNTKLIANRQSWEDPWKREKIENMAMLLLGAINAHGKVGLKMNAPKASLEKLMSIIPALRQPTISALADAEWVALEVIVTEKIVRKLIPELKRAGAEGIFEYNINKLID.

The protein belongs to the ATP phosphoribosyltransferase family. Long subfamily. Mg(2+) serves as cofactor.

The protein localises to the cytoplasm. The catalysed reaction is 1-(5-phospho-beta-D-ribosyl)-ATP + diphosphate = 5-phospho-alpha-D-ribose 1-diphosphate + ATP. It functions in the pathway amino-acid biosynthesis; L-histidine biosynthesis; L-histidine from 5-phospho-alpha-D-ribose 1-diphosphate: step 1/9. Feedback inhibited by histidine. Its function is as follows. Catalyzes the condensation of ATP and 5-phosphoribose 1-diphosphate to form N'-(5'-phosphoribosyl)-ATP (PR-ATP). Has a crucial role in the pathway because the rate of histidine biosynthesis seems to be controlled primarily by regulation of HisG enzymatic activity. The chain is ATP phosphoribosyltransferase from Chlorobium chlorochromatii (strain CaD3).